A 179-amino-acid chain; its full sequence is Inner membrane-spanning protein YciB (179 aa).

Helical transmembrane passes span I22–V42, M50–N70, W76–M96, L121–L141, and F149–I169.

It belongs to the YciB family.

It is found in the cell inner membrane. Functionally, plays a role in cell envelope biogenesis, maintenance of cell envelope integrity and membrane homeostasis. This Salmonella agona (strain SL483) protein is Inner membrane-spanning protein YciB.